Reading from the N-terminus, the 370-residue chain is MKIKDAKKPSFPWFGMDIGGTLVKLSYFEPIDITAEEEQEEVESLKSIRKYLTSNVAYGSTGIRDVHLELKDLTLFGRRGNLHFIRFPTQDLPTFIQMGRDKNFSTLQTVLSATGGGAYKFEKDFRTIGNLHLHKLDELDCLVKGLLYIDSVSFNGQAECYYFANASEPERCQKMPFNLDDPYPLLVVNIGSGVSILAVHSKDNYKRVTGTSLGGGTFLGLCSLLTGCESFEEALEMASKGDSTQADRLVRDIYGGDYERFGLPGWAVASSFGNMIYKEKRETVSKEDLARATLVTITNNIGSVARMCAVNEKINRVVFVGNFLRVNTLSMKLLAYALDYWSKGQLKALFLEHEGYFGAVGALLGLPNFS.

Catalysis depends on Glu-138, which acts as the Proton acceptor. Residues Ser-192, Ser-195, and Arg-207 each contribute to the acetyl-CoA site.

It belongs to the type II pantothenate kinase family. Homodimer. In terms of tissue distribution, highly expressed in the liver.

It localises to the cytoplasm. The catalysed reaction is (R)-pantothenate + ATP = (R)-4'-phosphopantothenate + ADP + H(+). The protein operates within cofactor biosynthesis; coenzyme A biosynthesis; CoA from (R)-pantothenate: step 1/5. Its activity is regulated as follows. Subject to allosteric regulation, exists in two distinct conformational states, a catalytically incompetent (or open) conformation stabilized by the binding of acetyl(acyl)-CoA, and a catalytically competent (or closed) conformation stabilized by ATP-binding. Acetyl-CoA and its thioesters act as allosteric inhibitors and compete with the ATP-binding site. Strongly inhibited by acetyl-CoA, malonyl-CoA and palmitoyl CoA and modestly inhibited by CoA. Inhibited by calcium hopantenate. Functionally, catalyzes the phosphorylation of pantothenate to generate 4'-phosphopantothenate in the first and rate-determining step of coenzyme A (CoA) synthesis. The polypeptide is Pantothenate kinase 3 (Pank3) (Mus musculus (Mouse)).